Reading from the N-terminus, the 493-residue chain is Glycerol kinase (493 aa).

Thr13 serves as a coordination point for ADP. Positions 13, 14, and 15 each coordinate ATP. Position 13 (Thr13) interacts with sn-glycerol 3-phosphate. Arg17 serves as a coordination point for ADP. Positions 83, 84, 135, and 244 each coordinate sn-glycerol 3-phosphate. The glycerol site is built by Arg83, Glu84, Tyr135, Asp244, and Gln245. Residues Thr266 and Gly309 each contribute to the ADP site. 4 residues coordinate ATP: Thr266, Gly309, Gln313, and Gly410. Residues Gly410 and Asn414 each contribute to the ADP site.

Belongs to the FGGY kinase family.

The enzyme catalyses glycerol + ATP = sn-glycerol 3-phosphate + ADP + H(+). Its pathway is polyol metabolism; glycerol degradation via glycerol kinase pathway; sn-glycerol 3-phosphate from glycerol: step 1/1. With respect to regulation, inhibited by fructose 1,6-bisphosphate (FBP). Its function is as follows. Key enzyme in the regulation of glycerol uptake and metabolism. Catalyzes the phosphorylation of glycerol to yield sn-glycerol 3-phosphate. The chain is Glycerol kinase from Shewanella halifaxensis (strain HAW-EB4).